Consider the following 122-residue polypeptide: uncharacterized protein (122 aa).

Positions 1–22 (MNMMRIFYIGLSGVGMMFSSMA) are cleaved as a signal peptide.

This is an uncharacterized protein from Escherichia coli (strain K12).